We begin with the raw amino-acid sequence, 484 residues long: Aspartyl/glutamyl-tRNA(Asn/Gln) amidotransferase subunit B (484 aa).

Belongs to the GatB/GatE family. GatB subfamily. Heterotrimer of A, B and C subunits.

The enzyme catalyses L-glutamyl-tRNA(Gln) + L-glutamine + ATP + H2O = L-glutaminyl-tRNA(Gln) + L-glutamate + ADP + phosphate + H(+). It catalyses the reaction L-aspartyl-tRNA(Asn) + L-glutamine + ATP + H2O = L-asparaginyl-tRNA(Asn) + L-glutamate + ADP + phosphate + 2 H(+). In terms of biological role, allows the formation of correctly charged Asn-tRNA(Asn) or Gln-tRNA(Gln) through the transamidation of misacylated Asp-tRNA(Asn) or Glu-tRNA(Gln) in organisms which lack either or both of asparaginyl-tRNA or glutaminyl-tRNA synthetases. The reaction takes place in the presence of glutamine and ATP through an activated phospho-Asp-tRNA(Asn) or phospho-Glu-tRNA(Gln). This chain is Aspartyl/glutamyl-tRNA(Asn/Gln) amidotransferase subunit B, found in Bordetella pertussis (strain Tohama I / ATCC BAA-589 / NCTC 13251).